The primary structure comprises 400 residues: Queuine tRNA-ribosyltransferase catalytic subunit (400 aa).

The active-site Proton acceptor is D89. Substrate is bound by residues 89–93 (DSGGF), D143, Q185, and G212. Residues 243–249 (GVGFPVD) are RNA binding. D262 acts as the Nucleophile in catalysis. Residues 267 to 271 (TRTAR) are RNA binding; important for wobble base 34 recognition. Zn(2+) is bound by residues C301, C303, C306, and H331.

This sequence belongs to the queuine tRNA-ribosyltransferase family. Heterodimer of a catalytic subunit and an accessory subunit. Zn(2+) is required as a cofactor.

The protein localises to the cytoplasm. It carries out the reaction guanosine(34) in tRNA + queuine = queuosine(34) in tRNA + guanine. Catalytic subunit of the queuine tRNA-ribosyltransferase (TGT) that catalyzes the base-exchange of a guanine (G) residue with queuine (Q) at position 34 (anticodon wobble position) in tRNAs with GU(N) anticodons (tRNA-Asp, -Asn, -His and -Tyr), resulting in the hypermodified nucleoside queuosine (7-(((4,5-cis-dihydroxy-2-cyclopenten-1-yl)amino)methyl)-7-deazaguanosine). Catalysis occurs through a double-displacement mechanism. The nucleophile active site attacks the C1' of nucleotide 34 to detach the guanine base from the RNA, forming a covalent enzyme-RNA intermediate. The proton acceptor active site deprotonates the incoming queuine, allowing a nucleophilic attack on the C1' of the ribose to form the product. The chain is Queuine tRNA-ribosyltransferase catalytic subunit from Caenorhabditis elegans.